The chain runs to 87 residues: NADH dehydrogenase [ubiquinone] 1 alpha subcomplex subunit 4-like 2 (87 aa).

It belongs to the complex I NDUFA4 subunit family.

In Mus musculus (Mouse), this protein is NADH dehydrogenase [ubiquinone] 1 alpha subcomplex subunit 4-like 2 (Ndufa4l2).